Here is a 277-residue protein sequence, read N- to C-terminus: Putative phosphoenolpyruvate synthase regulatory protein (277 aa).

157–164 (GVSRCGKT) serves as a coordination point for ADP.

Belongs to the pyruvate, phosphate/water dikinase regulatory protein family. PSRP subfamily.

It carries out the reaction [pyruvate, water dikinase] + ADP = [pyruvate, water dikinase]-phosphate + AMP + H(+). The enzyme catalyses [pyruvate, water dikinase]-phosphate + phosphate + H(+) = [pyruvate, water dikinase] + diphosphate. Functionally, bifunctional serine/threonine kinase and phosphorylase involved in the regulation of the phosphoenolpyruvate synthase (PEPS) by catalyzing its phosphorylation/dephosphorylation. The polypeptide is Putative phosphoenolpyruvate synthase regulatory protein (Enterobacter sp. (strain 638)).